A 147-amino-acid chain; its full sequence is 3-dehydroquinate dehydratase (147 aa).

Tyrosine 25 serves as the catalytic Proton acceptor. 3 residues coordinate substrate: asparagine 76, histidine 82, and aspartate 89. The Proton donor role is filled by histidine 102. Substrate-binding positions include 103 to 104 (IS) and arginine 113.

Belongs to the type-II 3-dehydroquinase family. In terms of assembly, homododecamer.

It catalyses the reaction 3-dehydroquinate = 3-dehydroshikimate + H2O. It functions in the pathway metabolic intermediate biosynthesis; chorismate biosynthesis; chorismate from D-erythrose 4-phosphate and phosphoenolpyruvate: step 3/7. Catalyzes a trans-dehydration via an enolate intermediate. In Mycobacterium tuberculosis (strain ATCC 25177 / H37Ra), this protein is 3-dehydroquinate dehydratase.